The chain runs to 231 residues: Putative transglycosylase H16_A0665 (231 aa).

The helical transmembrane segment at 8–28 (FIKLLVLAVIGGALLAAIAIL) threads the bilayer.

This sequence belongs to the glycosyltransferase 51 family.

It is found in the secreted. The protein resides in the membrane. The protein operates within cell wall biogenesis; peptidoglycan biosynthesis. Its function is as follows. Cell wall formation. The polypeptide is Putative transglycosylase H16_A0665 (Cupriavidus necator (strain ATCC 17699 / DSM 428 / KCTC 22496 / NCIMB 10442 / H16 / Stanier 337) (Ralstonia eutropha)).